The chain runs to 256 residues: Alcohol dehydrogenase (256 aa).

12-35 contributes to the NAD(+) binding site; it reads FVAGLGGIGLDTSKELVKRDLKNL. S140 is a binding site for substrate. The active-site Proton acceptor is Y153.

It belongs to the short-chain dehydrogenases/reductases (SDR) family. As to quaternary structure, homodimer.

It carries out the reaction a primary alcohol + NAD(+) = an aldehyde + NADH + H(+). The catalysed reaction is a secondary alcohol + NAD(+) = a ketone + NADH + H(+). The chain is Alcohol dehydrogenase (Adh) from Drosophila orena (Fruit fly).